Reading from the N-terminus, the 314-residue chain is Carbamate kinase (314 aa).

It belongs to the carbamate kinase family. In terms of assembly, homodimer.

It localises to the cytoplasm. It catalyses the reaction hydrogencarbonate + NH4(+) + ATP = carbamoyl phosphate + ADP + H2O + H(+). This is Carbamate kinase (cpkA) from Pyrococcus horikoshii (strain ATCC 700860 / DSM 12428 / JCM 9974 / NBRC 100139 / OT-3).